Here is a 461-residue protein sequence, read N- to C-terminus: D-phenylhydantoinase (461 aa).

A divalent metal cation is bound by residues His-59, His-61, and Lys-151. Lys-151 is modified (N6-carboxylysine). Tyr-156 is a binding site for substrate. Positions 182 and 239 each coordinate a divalent metal cation. Ser-286 contacts substrate. Asp-313 is a binding site for a divalent metal cation. A substrate-binding site is contributed by Asn-335.

Belongs to the metallo-dependent hydrolases superfamily. Hydantoinase/dihydropyrimidinase family. In terms of assembly, homotetramer. It depends on a divalent metal cation as a cofactor. In terms of processing, carboxylation allows a single lysine to coordinate two divalent metal cations.

The enzyme catalyses D-5-phenylhydantoin + H2O = N-carbamoyl-D-phenylglycine + H(+). Functionally, catalyzes the stereospecific hydrolysis of the cyclic amide bond of D-hydantoin derivatives with an aromatic side chains at the 5'-position. Has no activity on dihydropyrimidines. The physiological function is unknown. In Escherichia coli (strain SE11), this protein is D-phenylhydantoinase.